A 491-amino-acid chain; its full sequence is FAD-dependent monooxygenase cle3 (491 aa).

Residues Glu-55, Gly-69, Arg-128, Asp-330, and Ala-343 each contribute to the FAD site. N-linked (GlcNAc...) asparagine glycosylation is present at Asn-380. A helical transmembrane segment spans residues 462-482 (STVVWTSLGILGLVVFLFLLF).

This sequence belongs to the paxM FAD-dependent monooxygenase family. FAD is required as a cofactor.

It localises to the membrane. The protein operates within secondary metabolite biosynthesis; terpenoid biosynthesis. In terms of biological role, FAD-dependent monooxygenase; part of the cluster A that mediates the biosynthesis of chevalone E and its oxidized derivatives that possess a unique five-membered lactone ring and can synergistically enhance the cytotoxicity of doxorubicin (DOX) in breast cancer cells. Within the pathway, cle3 takes part to the biosynthesis of the molecular scaffold by catalyzing the formation of an (S)-epoxide ring at the terminal olefin of the geranylgeranyl group. The molecular scaffold is commonly biosynthesized by a series of enzymes including the non-reducing polyketide synthase (NR-PKS) cle1 that produces the alpha-pyrone triacetic acid lactone (TAL); The membrane-bound prenyltransferase cle5 that accepts TAL as its substrate to perform a C-3 geranylgeranylation reaction, in which the pathway-dedicated GGPS cle6 is required to provide GGPP, the other substrate of cle5; the FAD-dependent monooxygenase Cle3 that forms an (S)-epoxide ring at the terminal olefin of the geranylgeranyl group; and the terpene cyclase Cle7 that catalyzes the cyclization of the prenyl group that yields the pentacyclic pathway intermediate chevalone E. Chevalone E can derivatize into seven new oxidized analogs by the cytochrome P450 monooxygenases cle2 (acting at C-20) and cle4 (acting at C-11 and C-12). This Aspergillus versicolor protein is FAD-dependent monooxygenase cle3.